The chain runs to 292 residues: Shikimate dehydrogenase (NADP(+)) (292 aa).

Residues 22 to 24 (SLS) and serine 69 each bind shikimate. Residue lysine 73 is the Proton acceptor of the active site. Shikimate-binding residues include asparagine 94 and aspartate 111. NADP(+) is bound by residues 135–139 (GVGGA) and isoleucine 236. Tyrosine 238 contacts shikimate. Glycine 260 is a binding site for NADP(+).

Belongs to the shikimate dehydrogenase family. As to quaternary structure, homodimer.

The catalysed reaction is shikimate + NADP(+) = 3-dehydroshikimate + NADPH + H(+). It participates in metabolic intermediate biosynthesis; chorismate biosynthesis; chorismate from D-erythrose 4-phosphate and phosphoenolpyruvate: step 4/7. Functionally, involved in the biosynthesis of the chorismate, which leads to the biosynthesis of aromatic amino acids. Catalyzes the reversible NADPH linked reduction of 3-dehydroshikimate (DHSA) to yield shikimate (SA). The protein is Shikimate dehydrogenase (NADP(+)) of Streptococcus pyogenes serotype M3 (strain ATCC BAA-595 / MGAS315).